We begin with the raw amino-acid sequence, 354 residues long: Carbonic anhydrase 12 (354 aa).

A signal peptide spans 1–24 (MPHRSLRATVVLLLVILKKQPSSS). Topologically, residues 25–301 (APLNGSKWTY…QGLLTDTGLS (277 aa)) are extracellular. Residues Asn-28, Asn-42, Asn-80, and Asn-88 are each glycosylated (N-linked (GlcNAc...) asparagine). One can recognise an Alpha-carbonic anhydrase domain in the interval 30–290 (SKWTYVGPAG…FDERLVYISF (261 aa)). Residues Cys-50 and Cys-231 are joined by a disulfide bond. The active-site Proton donor/acceptor is the His-94. Zn(2+)-binding residues include His-120, His-122, and His-146. 227–228 (TT) is a substrate binding site. Residues 302–322 (LGIILSVALAGVLGISIVLAV) form a helical membrane-spanning segment. Residues 323-354 (SIWLFKRKKSKKGDNKGVIYKPAIKKEAEVHA) are Cytoplasmic-facing.

Belongs to the alpha-carbonic anhydrase family. As to quaternary structure, homodimer. Zn(2+) is required as a cofactor.

The protein localises to the membrane. It localises to the cell membrane. It catalyses the reaction hydrogencarbonate + H(+) = CO2 + H2O. Inhibited by acetazolamide. Reversible hydration of carbon dioxide. This Mus musculus (Mouse) protein is Carbonic anhydrase 12.